A 527-amino-acid chain; its full sequence is F-box protein SKIP2 (527 aa).

The F-box domain maps to 39–85 (DRDFTGDLPDECLAHVFQFLGAGDRKRCSLVCKRWLLVDGQSRHRLS).

In terms of assembly, part of a SCF (ASK-cullin-F-box) protein ligase complex. Interacts with SKP1A/ASK1, SKP1B/ASK2 and ASK11.

The protein localises to the nucleus. It functions in the pathway protein modification; protein ubiquitination. Its function is as follows. Component of SCF(ASK-cullin-F-box) E3 ubiquitin ligase complexes, which may mediate the ubiquitination and subsequent proteasomal degradation of target proteins. The protein is F-box protein SKIP2 (SKIP2) of Arabidopsis thaliana (Mouse-ear cress).